The chain runs to 68 residues: Large ribosomal subunit protein bL33c (68 aa).

The protein belongs to the bacterial ribosomal protein bL33 family.

It localises to the plastid. The protein localises to the chloroplast. This is Large ribosomal subunit protein bL33c from Nymphaea alba (White water-lily).